Here is a 285-residue protein sequence, read N- to C-terminus: Enterobactin synthase component B (285 aa).

The isochorismatase stretch occupies residues Ala2–Ala213. The region spanning Ala209–Val284 is the Carrier domain. Mg(2+) contacts are provided by Asp227, Gly242, and Asp244. An O-(pantetheine 4'-phosphoryl)serine modification is found at Ser245.

It in the N-terminal section; belongs to the isochorismatase family. As to quaternary structure, proteins EntB, EntD, EntE, and EntF form a multienzyme complex called enterobactin synthase. Homodimer. Also forms a specific pairwise interaction with EntC; this interaction likely facilitates substrate channeling to connect the EntB and EntC active sites. Mg(2+) serves as cofactor. 4'-phosphopantetheine is transferred from CoA to a specific serine of apo-EntB by EntD. Holo-EntB so formed is then acylated with 2,3-dihydroxybenzoate in a reaction catalyzed by EntE.

It localises to the cytoplasm. It carries out the reaction 3 2,3-dihydroxybenzoate + 3 L-serine + 6 ATP = enterobactin + 6 AMP + 6 diphosphate + 4 H(+). The enzyme catalyses isochorismate + H2O = (2S,3S)-2,3-dihydroxy-2,3-dihydrobenzoate + pyruvate. Its pathway is siderophore biosynthesis; enterobactin biosynthesis. Functionally, involved in the biosynthesis of the siderophore enterobactin (enterochelin), which is a macrocyclic trimeric lactone of N-(2,3-dihydroxybenzoyl)-serine. The serine trilactone serves as a scaffolding for the three catechol functionalities that provide hexadentate coordination for the tightly ligated iron(3+) atoms. EntB is a bifunctional protein that serves as an isochorismate lyase and an aryl carrier protein (ArCP). Catalyzes the conversion of isochorismate to 2,3-dihydro-2,3-dihydroxybenzoate (2,3-diDHB), the precursor of 2,3-dihydroxybenzoate (DHB). In the enterobactin assembly, EntB functions as an aryl carrier protein phosphopantetheinylated near the C terminus by EntD to yield holo-EntB, which is then acylated by EntE with 2,3-dihydroxybenzoyl-AMP to form DHB-holo-EntB. Then this product will serve in the formation of the amide bond between 2,3-dihydroxybenzoate (DHB) and L-serine. The sequence is that of Enterobactin synthase component B from Escherichia coli O157:H7.